Here is a 511-residue protein sequence, read N- to C-terminus: Putative polyol transporter 2 (511 aa).

A run of 12 helical transmembrane segments spans residues 25–45, 63–83, 94–114, 117–137, 156–176, 186–206, 284–304, 324–344, 351–371, 384–404, 424–444, and 454–474; these read FAFA…YDIG, VQLE…SGAA, YTIV…GFAT, PFIM…MMIA, FPEI…YFFA, FMLG…LAMP, ILIA…DAVV, LATV…TCLV, ALLL…GTSL, WAIG…SLGA, GASL…MTFL, and GAFL…FTFL.

It belongs to the major facilitator superfamily. Sugar transporter (TC 2.A.1.1) family.

Its subcellular location is the membrane. Its function is as follows. Plasma membrane sugar-proton symporter. The protein is Putative polyol transporter 2 (PLT2) of Arabidopsis thaliana (Mouse-ear cress).